The following is a 186-amino-acid chain: Peptide deformylase 2 (186 aa).

Fe cation-binding residues include Cys-104 and His-146. Glu-147 is a catalytic residue. His-150 contributes to the Fe cation binding site.

It belongs to the polypeptide deformylase family. Fe(2+) is required as a cofactor.

The enzyme catalyses N-terminal N-formyl-L-methionyl-[peptide] + H2O = N-terminal L-methionyl-[peptide] + formate. Removes the formyl group from the N-terminal Met of newly synthesized proteins. Requires at least a dipeptide for an efficient rate of reaction. N-terminal L-methionine is a prerequisite for activity but the enzyme has broad specificity at other positions. This Streptomyces avermitilis (strain ATCC 31267 / DSM 46492 / JCM 5070 / NBRC 14893 / NCIMB 12804 / NRRL 8165 / MA-4680) protein is Peptide deformylase 2.